Reading from the N-terminus, the 133-residue chain is Small ribosomal subunit protein uS9 (133 aa).

This sequence belongs to the universal ribosomal protein uS9 family.

This chain is Small ribosomal subunit protein uS9, found in Ureaplasma parvum serovar 3 (strain ATCC 700970).